A 170-amino-acid chain; its full sequence is Cilia- and flagella-associated protein 276 (170 aa).

2 disordered regions span residues 1 to 37 (MPLT…PTHL) and 151 to 170 (HTAA…FFST).

In terms of assembly, microtubule inner protein component of sperm flagellar doublet microtubules. In terms of tissue distribution, expressed in trachea multiciliated cells.

It localises to the cytoplasm. It is found in the cytoskeleton. Its subcellular location is the cilium axoneme. The protein localises to the flagellum axoneme. Its function is as follows. Microtubule inner protein (MIP) part of the dynein-decorated doublet microtubules (DMTs) in cilia axoneme, which is required for motile cilia beating. May play an important role for the maintenance of myelin-axon integrity. May affect intracellular Ca(2+) homeostasis. The polypeptide is Cilia- and flagella-associated protein 276 (Bos taurus (Bovine)).